Here is a 205-residue protein sequence, read N- to C-terminus: Small ribosomal subunit protein uS4c (205 aa).

Residues Gly-16–Lys-40 form a disordered region. One can recognise an S4 RNA-binding domain in the interval Met-93–Leu-161.

Belongs to the universal ribosomal protein uS4 family. As to quaternary structure, part of the 30S ribosomal subunit. Contacts protein S5. The interaction surface between S4 and S5 is involved in control of translational fidelity.

The protein resides in the plastid. It is found in the chloroplast. One of the primary rRNA binding proteins, it binds directly to 16S rRNA where it nucleates assembly of the body of the 30S subunit. In terms of biological role, with S5 and S12 plays an important role in translational accuracy. This chain is Small ribosomal subunit protein uS4c (rps4), found in Euglena gracilis.